Reading from the N-terminus, the 262-residue chain is Ribosomal RNA small subunit methyltransferase A (262 aa).

S-adenosyl-L-methionine is bound by residues asparagine 14, leucine 16, glycine 41, glutamate 62, aspartate 87, and asparagine 109.

Belongs to the class I-like SAM-binding methyltransferase superfamily. rRNA adenine N(6)-methyltransferase family. RsmA subfamily.

It is found in the cytoplasm. The enzyme catalyses adenosine(1518)/adenosine(1519) in 16S rRNA + 4 S-adenosyl-L-methionine = N(6)-dimethyladenosine(1518)/N(6)-dimethyladenosine(1519) in 16S rRNA + 4 S-adenosyl-L-homocysteine + 4 H(+). Functionally, specifically dimethylates two adjacent adenosines (A1518 and A1519) in the loop of a conserved hairpin near the 3'-end of 16S rRNA in the 30S particle. May play a critical role in biogenesis of 30S subunits. This is Ribosomal RNA small subunit methyltransferase A from Francisella tularensis subsp. novicida (strain U112).